Here is a 2442-residue protein sequence, read N- to C-terminus: Piezo-type mechanosensitive ion channel component 1 (2442 aa).

Topologically, residues 1 to 5 are extracellular; that stretch reads MTVPP. A helical transmembrane segment spans residues 6 to 26; sequence LLKSCVVKLLLPAALLAAAII. Position 27 (Arg27) is a topological domain, cytoplasmic. Residues 28–48 form a helical membrane-spanning segment; it reads PSFLSIGYVLLALVSAVLPPI. The Extracellular portion of the chain corresponds to 49–56; sequence RKSLALPK. The chain crosses the membrane as a helical span at residues 57 to 77; the sequence is LVGTFVIITFLFCLAVALGVG. Residues 78–122 are Cytoplasmic-facing; the sequence is SYQISEQVVHKNDRTYICNRSDTTLFRSIGLVRFHPTGTFESTRA. Residues 123-143 traverse the membrane as a helical segment; sequence FLPEIIATSAALLTIIIVMFL. Residues 144–173 are Extracellular-facing; the sequence is SHRDEQLDVVGDVVTVRSESGREQRRQRKL. A helical membrane pass occupies residues 174-196; the sequence is AAIMWSAIGNSLRRLTNFVLFLF. The Cytoplasmic portion of the chain corresponds to 197–198; sequence TA. Residues 199 to 219 traverse the membrane as a helical segment; that stretch reads YVGIVKPSLSNSIYFLAFLFI. The Extracellular portion of the chain corresponds to 220 to 239; the sequence is STWWSTYTPLRHGVYNQIKK. A helical transmembrane segment spans residues 240 to 260; it reads FLIFYSALHFLVLYTYQIPIV. Residues 261–303 lie on the Cytoplasmic side of the membrane; the sequence is HHSWLPTGSFLPRLFGLTVLMDSSCPEWWKFPFVAPDFNDDDL. A helical transmembrane segment spans residues 304 to 324; that stretch reads IMKWPLYANPIVVLVFFYLTV. Residues 325-454 are Extracellular-facing; it reads AQYKFTRNGS…GDKESAASKG (130 aa). Asn332, Asn392, and Asn440 each carry an N-linked (GlcNAc...) asparagine glycan. Residues 389-417 form a disordered region; the sequence is LLSNASSSANDDEQGRARSRSPLRNGEEQ. Residues 455–475 traverse the membrane as a helical segment; the sequence is MIAVMTFVIFHSYSIALTAMM. The Cytoplasmic portion of the chain corresponds to 476–478; sequence TWA. The chain crosses the membrane as a helical span at residues 479 to 499; sequence LLYHSIFGLILLILTCILWIF. The Extracellular portion of the chain corresponds to 500–506; sequence RDTRKSS. Residues 507-527 traverse the membrane as a helical segment; the sequence is FAMAPIILMYIEFLLILQYFL. The Cytoplasmic segment spans residues 528-552; sequence SMDIHAEIGDPAWMNFVGIEWTTLP. Residues 553 to 573 traverse the membrane as a helical segment; that stretch reads VHAVIILCVQTLLTLPVFLLL. Residues 574–633 lie on the Extracellular side of the membrane; that stretch reads RLARREKFYESLSDYERQRRINSYGTFGASKTGAGGVAVAKFQDPKSRKFAAFVEYLSNK. The helical transmembrane segment at 634–654 threads the bilayer; it reads VSVYFIFVVSVVLLVVSTCFA. Over 655 to 656 the chain is Cytoplasmic; it reads PN. The helical transmembrane segment at 657 to 677 threads the bilayer; sequence FYNILFFALWALNLIYLKFSF. Residues 678–683 are Extracellular-facing; sequence RLYRGL. A helical transmembrane segment spans residues 684-704; that stretch reads AYAFWLTLTFYTSIVIIALYI. Over 705-739 the chain is Cytoplasmic; sequence YQFPGVSQWIIRNTSLSQEWLNAIGLVDFRAIGES. A helical transmembrane segment spans residues 740-760; that stretch reads GALFLQLLAPIALFVVTMLQL. The Extracellular segment spans residues 761–832; that stretch reads KFFHGPWSRA…WRFFEVHISK (72 aa). The segment at 768–798 is disordered; the sequence is SRATSPRRAENDPPTSTTEAAAVASTSGTQG. Residues 782 to 794 are compositionally biased toward low complexity; it reads TSTTEAAAVASTS. N-linked (GlcNAc...) asparagine glycosylation is present at Asn816. A helical membrane pass occupies residues 833–853; it reads IVFVIIAIFIANNINALYIPL. The Cytoplasmic segment spans residues 854–874; it reads VILLSLAICLPSAADGIFSLF. Residues 875-895 traverse the membrane as a helical segment; the sequence is MCAYLFLVALSKMIYQLDIVP. The Extracellular portion of the chain corresponds to 896 to 931; it reads ELSQIDRGVGADNCSHGNISMPEWFGLKKEVEGTEP. Residues Asn908 and Asn913 are each glycosylated (N-linked (GlcNAc...) asparagine). The chain crosses the membrane as a helical span at residues 932–952; it reads IYMLFGVIVSIIALAFQSIVI. The Cytoplasmic segment spans residues 953-990; the sequence is YRQRHYRASLGLPESMRAKVFPDFHHSHFDRSLKNAIQ. The helical transmembrane segment at 991–1011 threads the bilayer; it reads FLIDYGFYKFGLEITMIAIGI. Asp1012 is a topological domain (extracellular). The helical transmembrane segment at 1013–1033 threads the bilayer; the sequence is IFNRMDALAAIQCFWLVLFAL. At 1034–1041 the chain is on the cytoplasmic side; sequence NKRVFVRR. A helical membrane pass occupies residues 1042 to 1062; it reads IWVFYVIYMAILYPLQFFSYV. Over 1063-1096 the chain is Extracellular; it reads GLPPDSCIEYPWSYWIPSYSDDARFNLSYLLNLS. N-linked (GlcNAc...) asparagine glycosylation is found at Asn1088 and Asn1094. The chain crosses the membrane as a helical span at residues 1097–1117; sequence IYGVNWPSAYLIGDFFVLLLA. The Cytoplasmic segment spans residues 1118 to 1160; sequence SCQLAVFRREGEDNDSIYNDGNFVIKPENPQYDFIDTKKSYVD. Residues 1161 to 1181 form a helical membrane-spanning segment; that stretch reads YFKSFVFHYGHWITLMSTLAA. At 1182 to 1187 the chain is on the extracellular side; it reads GIAGTS. A helical membrane pass occupies residues 1188-1210; sequence LFALGYIIFTLTMLWSGNNLYVM. Topologically, residues 1211–1231 are cytoplasmic; that stretch reads NSTLRSFEHTLKRWNALLGYT. The chain crosses the membrane as a helical span at residues 1232-1252; that stretch reads LFTITMKVCLQIFGCVFLSWF. The Extracellular portion of the chain corresponds to 1253–1299; that stretch reads DQSGGWGKTLCIVRQLFSITCVNNECHVLKELEDFSKACAVETKEGN. The helical transmembrane segment at 1300–1320 threads the bilayer; it reads IGFDVIALSFLVFQIRIFHSW. At 1321–1615 the chain is on the cytoplasmic side; it reads YFQHCMVEYR…VVNCIGAHTD (295 aa). The interval 1463–1502 is disordered; that stretch reads DTIKDPDSRALIAVSEPEARKPGGTEETDGDEDEDNKDSK. Residues 1488–1498 show a composition bias toward acidic residues; sequence EETDGDEDEDN. The chain crosses the membrane as a helical span at residues 1616–1636; sequence ILCYFFAIMTQVMTGGLITLP. Over 1637–1654 the chain is Extracellular; it reads LPLMSLFWGNLSNPRPSK. Residue Asn1646 is glycosylated (N-linked (GlcNAc...) asparagine). A helical transmembrane segment spans residues 1655-1675; it reads FFWVTMITYTECVIVIKFVCQ. Topologically, residues 1676-1706 are cytoplasmic; it reads FAFMPYNSITWRTEHQMDPMSLDKLFGVSQR. The chain crosses the membrane as a helical span at residues 1707–1727; the sequence is DSFALWDIVLLFSLFFHRYML. The Extracellular portion of the chain corresponds to 1728 to 1833; it reads RKLGLWKDAN…KFRYIRDLYP (106 aa). N-linked (GlcNAc...) asparagine glycosylation is present at Asn1737. A helical transmembrane segment spans residues 1834–1854; that stretch reads IMFGIDVICFLIMTFGYSAFG. At 1855-1866 the chain is on the cytoplasmic side; it reads EGGSGNVLDDVK. A helical transmembrane segment spans residues 1867–1887; the sequence is ASRIPVTLVVMLVGMTLAIII. Topologically, residues 1888 to 1900 are extracellular; the sequence is DRALYLRKSVVGK. A helical transmembrane segment spans residues 1901–1921; it reads LIYQVLMIAFLHIWVFLVLPN. Topologically, residues 1922 to 1930 are cytoplasmic; the sequence is MTRRSAISN. A helical membrane pass occupies residues 1931–1951; it reads HVAQALYVIKSCYFLVSAWQI. The Extracellular segment spans residues 1952 to 2046; the sequence is RNGYPELCIG…KGKLVKYMMG (95 aa). A helical transmembrane segment spans residues 2047–2067; that stretch reads FPIIIGVVIFIFSPLLLWSLL. Topologically, residues 2068–2346 are cytoplasmic; that stretch reads NQIGTISMPE…VGFIDRAFPS (279 aa). A helical membrane pass occupies residues 2347 to 2367; that stretch reads FLAKVFKGGVIAVYLSVILVV. The Extracellular segment spans residues 2368 to 2442; it reads GRGLVRGIFT…WTRMSKKKQE (75 aa).

This sequence belongs to the PIEZO (TC 1.A.75) family. Expressed in the pharyngeal-intestinal and spermathecal-uterine valves and in multiple reproductive tissues including the germline, somatic oviduct, and spermatheca. During reproduction, it is expressed in sheath cells, sperm, both spermathecal valves and the spermathecal bag cells.

It localises to the cell membrane. Pore-forming subunit of a mechanosensitive non-specific cation channel. Generates currents characterized by a linear current-voltage relationship. Plays a role in reproduction by positively regulating inter-tissue signaling to promote oocyte maturation, ovulation and fertilization, and sperm navigation from and to the spermatheca. May play a role in regulating cytosolic and endoplasmic reticulum calcium ion release. This is Piezo-type mechanosensitive ion channel component 1 from Caenorhabditis elegans.